The primary structure comprises 138 residues: Transposon Tn10 TetD protein (138 aa).

Positions 31-129 constitute an HTH araC/xylS-type domain; the sequence is KDVLLWIEHN…KVTPSYYRRN (99 aa). DNA-binding regions (H-T-H motif) lie at residues 48 to 69 and 96 to 119; these read DDVA…KKVT and ILEI…KYIF.

The protein is Transposon Tn10 TetD protein (tetD) of Escherichia coli.